We begin with the raw amino-acid sequence, 292 residues long: 33 kDa chaperonin (292 aa).

Intrachain disulfides connect Cys230-Cys232 and Cys263-Cys266.

Belongs to the HSP33 family. Under oxidizing conditions two disulfide bonds are formed involving the reactive cysteines. Under reducing conditions zinc is bound to the reactive cysteines and the protein is inactive.

It localises to the cytoplasm. Redox regulated molecular chaperone. Protects both thermally unfolding and oxidatively damaged proteins from irreversible aggregation. Plays an important role in the bacterial defense system toward oxidative stress. In Escherichia coli O17:K52:H18 (strain UMN026 / ExPEC), this protein is 33 kDa chaperonin.